Reading from the N-terminus, the 275-residue chain is Ovocalyxin-32 (275 aa).

The signal sequence occupies residues 1-23 (MPGLRAALPAALLLLSSFPPAAA). 2 consecutive Cystatin LXN-type domains span residues 32-131 (PGVM…NKKQ) and 151-255 (TANY…GLED). The disordered stretch occupies residues 254 to 275 (EDGSGQDSGSAAGTSHETKGNF). Low complexity predominate over residues 256-268 (GSGQDSGSAAGTS).

It belongs to the protease inhibitor I47 (latexin) family. In terms of tissue distribution, expressed at high levels in the uterine and isthmus regions of the oviduct, and concentrated in the eggshell.

It localises to the secreted. In terms of biological role, component of the matrix of the eggshell. This is Ovocalyxin-32 from Gallus gallus (Chicken).